Consider the following 586-residue polypeptide: Serine/threonine-protein phosphatase 2A 56 kDa regulatory subunit delta isoform (586 aa).

The disordered stretch occupies residues 1–80 (MSPSPSSSGK…QSSSRFNLSK (80 aa)). A run of 6 repeats spans residues 21 to 22 (QP), 23 to 24 (QP), 25 to 26 (QP), 27 to 28 (QP), 29 to 30 (QP), and 31 to 32 (QP). The 8 X 2 AA approximate tandem repeats of Q-P stretch occupies residues 21 to 36 (QPQPQPQPQPQPQSQP). Residues 23–35 (QPQPQPQPQPQSQ) show a composition bias toward pro residues. One copy of the 7; approximate repeat lies at 33–34 (QS). Residues 35-36 (QP) form repeat 8. Residues 36–45 (PPSSNKRPSN) are compositionally biased toward low complexity. Phosphothreonine is present on Thr-47. Residues Ser-72, Ser-73, and Ser-74 each carry the phosphoserine modification. An SH3-binding; class I motif is present at residues 507–514 (RAPPPLPP). The short motif at 532-549 (KRTVETEAVQMLKDIKKE) is the Nuclear localization signal element. Phosphoserine occurs at positions 557 and 582.

The protein belongs to the phosphatase 2A regulatory subunit B56 family. As to quaternary structure, PP2A consists of a common heterodimeric core enzyme, composed of a 36 kDa catalytic subunit (subunit C) and a 65 kDa constant regulatory subunit (PR65 or subunit A), that associates with a variety of regulatory subunits. Proteins that associate with the core dimer include three families of regulatory subunits B (the R2/B/PR55/B55, R3/B''/PR72/PR130/PR59 and R5/B'/B56 families), the 48 kDa variable regulatory subunit, viral proteins, and cell signaling molecules. Interacts with the PP2A A subunit PPP2R1A. Interacts with SGO1. Interacts with ADCY8. As to expression, highly expressed in brain.

Its subcellular location is the nucleus. Its function is as follows. The B regulatory subunit might modulate substrate selectivity and catalytic activity, and might also direct the localization of the catalytic enzyme to a particular subcellular compartment. The polypeptide is Serine/threonine-protein phosphatase 2A 56 kDa regulatory subunit delta isoform (PPP2R5D) (Oryctolagus cuniculus (Rabbit)).